Consider the following 89-residue polypeptide: Small ribosomal subunit protein uS15 (89 aa).

The protein belongs to the universal ribosomal protein uS15 family. As to quaternary structure, part of the 30S ribosomal subunit. Forms a bridge to the 50S subunit in the 70S ribosome, contacting the 23S rRNA.

Functionally, one of the primary rRNA binding proteins, it binds directly to 16S rRNA where it helps nucleate assembly of the platform of the 30S subunit by binding and bridging several RNA helices of the 16S rRNA. In terms of biological role, forms an intersubunit bridge (bridge B4) with the 23S rRNA of the 50S subunit in the ribosome. This Klebsiella pneumoniae subsp. pneumoniae (strain ATCC 700721 / MGH 78578) protein is Small ribosomal subunit protein uS15.